Consider the following 801-residue polypeptide: Na(+)/H(+) antiporter subunit A1 (801 aa).

19 consecutive transmembrane segments (helical) span residues 1–21 (MSLL…IPIL), 28–48 (IHLG…MLTL), 79–99 (LGLL…LYSI), 117–137 (LFMG…LYLF), 166–186 (LIIT…LAIP), 206–226 (PFFI…SAQF), 265–285 (IFAA…ITLF), 300–320 (ILAF…GIGA), 337–357 (FTAA…LFMI), 373–393 (LGGL…TALS), 427–447 (LGYL…VYSI), 472–492 (ILML…GLFP), 522–542 (GLTP…LLIV), 591–611 (LVII…SVPF), 623–643 (IFEV…LFAK), 646–666 (LFNI…FIFF), 671–691 (LALT…LCFY), 707–727 (LTNA…GLIA), and 764–784 (MDTL…YTMI).

This sequence belongs to the CPA3 antiporters (TC 2.A.63) subunit A family. May form a heterooligomeric complex that consists of seven subunits: mnhA1, mnhB1, mnhC1, mnhD1, mnhE1, mnhF1 and mnhG1.

It localises to the cell membrane. Mnh complex is a Na(+)/H(+) antiporter involved in Na(+) excretion. This chain is Na(+)/H(+) antiporter subunit A1 (mnhA1), found in Staphylococcus aureus (strain bovine RF122 / ET3-1).